Here is a 692-residue protein sequence, read N- to C-terminus: Formate hydrogenlyase transcriptional activator FhlA (692 aa).

One can recognise a GAF domain in the interval 202 to 344; sequence DMDELVSEVA…QIAERVAIAV (143 aa). Residues 381–610 form the Sigma-54 factor interaction domain; the sequence is IIGRSEAMYS…LENVIERAVL (230 aa). Residues 409-416 and 472-481 each bind ATP; these read GETGTGKE and ADKSSLFLDE. Residues 663–682 constitute a DNA-binding region (H-T-H motif); that stretch reads PKGAAQRLGLKRTTLLSRMK.

Required for induction of expression of the formate dehydrogenase H and hydrogenase-3 structural genes. Also activates expression of hyf operon (encodes the silent hydrogenase-4 gene cluster). This Escherichia coli (strain K12) protein is Formate hydrogenlyase transcriptional activator FhlA (fhlA).